We begin with the raw amino-acid sequence, 404 residues long: LL-diaminopimelate aminotransferase (404 aa).

Tyr15 and Gly42 together coordinate substrate. Residues Tyr72, Ala108–Lys109, Tyr132, Asn188, Tyr219, and Ser247–Ser249 contribute to the pyridoxal 5'-phosphate site. 3 residues coordinate substrate: Lys109, Tyr132, and Asn188. Lys250 carries the N6-(pyridoxal phosphate)lysine modification. Arg258 and Asn288 together coordinate pyridoxal 5'-phosphate. Residues Asn288 and Arg384 each coordinate substrate.

This sequence belongs to the class-I pyridoxal-phosphate-dependent aminotransferase family. LL-diaminopimelate aminotransferase subfamily. In terms of assembly, homodimer. Pyridoxal 5'-phosphate serves as cofactor.

It carries out the reaction (2S,6S)-2,6-diaminopimelate + 2-oxoglutarate = (S)-2,3,4,5-tetrahydrodipicolinate + L-glutamate + H2O + H(+). Its pathway is amino-acid biosynthesis; L-lysine biosynthesis via DAP pathway; LL-2,6-diaminopimelate from (S)-tetrahydrodipicolinate (aminotransferase route): step 1/1. Functionally, involved in the synthesis of meso-diaminopimelate (m-DAP or DL-DAP), required for both lysine and peptidoglycan biosynthesis. Catalyzes the direct conversion of tetrahydrodipicolinate to LL-diaminopimelate. This chain is LL-diaminopimelate aminotransferase, found in Agathobacter rectalis (strain ATCC 33656 / DSM 3377 / JCM 17463 / KCTC 5835 / VPI 0990) (Eubacterium rectale).